Reading from the N-terminus, the 267-residue chain is Apolipoprotein A-I (267 aa).

Residues 1–18 (MKAAVLTLAVLFLTGSQA) form the signal peptide. A run of 2 repeats spans residues 68–89 (LKLL…EQLG) and 90–111 (PVTQ…QEMS). Residues 68–267 (LKLLDNWDSV…EEYTKKLNTQ (200 aa)) form a 10 X approximate tandem repeats region. Met110 carries the methionine sulfoxide modification. The stretch at 112 to 122 (KDLEEVKAKVQ) is one 3; half-length repeat. Repeat copies occupy residues 123 to 144 (PYLD…QKVE), 145 to 166 (PLRA…EKLS), 167 to 188 (PLGE…THLA), 189 to 210 (PYSD…ENGG), and 211 to 232 (ARLA…EKAK). Position 136 is a methionine sulfoxide (Met136). One copy of the 9; half-length repeat lies at 233–243 (PALEDLRQGLL). Residues 244-267 (PVLESFKVSFLSALEEYTKKLNTQ) form repeat 10.

Belongs to the apolipoprotein A1/A4/E family. In terms of assembly, homodimer. Interacts with APOA1BP and CLU. Component of a sperm activating protein complex (SPAP), consisting of APOA1, an immunoglobulin heavy chain, an immunoglobulin light chain and albumin. Interacts with NDRG1. Interacts with SCGB3A2. Interacts with NAXE and YJEFN3. Post-translationally, glycosylated. In terms of processing, palmitoylated. Phosphorylation sites are present in the extracellular medium. In terms of tissue distribution, major protein of plasma HDL, also found in chylomicrons.

It localises to the secreted. In terms of biological role, participates in the reverse transport of cholesterol from tissues to the liver for excretion by promoting cholesterol efflux from tissues and by acting as a cofactor for the lecithin cholesterol acyltransferase (LCAT). As part of the SPAP complex, activates spermatozoa motility. The protein is Apolipoprotein A-I (APOA1) of Pan paniscus (Pygmy chimpanzee).